The primary structure comprises 253 residues: Protein phosphatase CheZ (253 aa).

Residues 1–84 (MTQEELDALM…EWPPPPPTEE (84 aa)) are disordered. The segment covering 21–69 (LETKEETKEEAKEEAKEEAKEEAKEKEEIKEESSSQKMTVKKEDAEKYG) has biased composition (basic and acidic residues).

This sequence belongs to the CheZ family. As to quaternary structure, interacts with ChePep; this interaction is essential for each other polar localization.

The protein localises to the cytoplasm. Its function is as follows. Plays an important role in bacterial chemotaxis signal transduction pathway by accelerating the dephosphorylation of phosphorylated CheY (CheY-P). Also dephosphorylates CheV2 but not CheV1 or CheV3. In addition, forms a distinct chemotaxis regulatory complex with ChePep independently of the core chemotaxis signaling proteins. The sequence is that of Protein phosphatase CheZ from Helicobacter pylori (strain ATCC 700392 / 26695) (Campylobacter pylori).